Reading from the N-terminus, the 475-residue chain is MASTLRLGTSALRSSSIAAKPVVQSAAFNGLRCYSTGKAKSLKETFAEKLPAELEKVKKLRKEHGSKVIGEVTLDQAYGGARGVKCLVWEGSVLDSEEGIRFRGRTIPECQELLPKAPGGQEPLPEGLFWLLLTGEIPTEQQVRDLSAEWAARSDLPKFIEELIDRCPSTLHPMSQFSLAVTALEHESAFAKAYAKGINKKDYWNYTFEDSMDLIAKLPTIAAKIYRNVFKDGKVAPIQKDKDYSYNLANQLGYGDNNDFVELMRLYLTIHSDHEGGNVSAHTTHLVGSALSSPMLSLAAGLNGLAGPLHGLANQEVLNWLTKMKAAIGNDLSDEAIKNYLWSTLNAGQVVPGYGHAVLRKTDPRYVSQREFALRKLPDDPMFKLVSQVYKIAPGVLTEHGKTKNPYPNVDAHSGVLLQYYGLTEANYYTVLFGVSRALGVLPQLIIDRALGAPIERPKSYSTELSPSLLVLSCK.

Active-site residues include H310, H356, and D411.

Belongs to the citrate synthase family.

It localises to the mitochondrion matrix. It catalyses the reaction oxaloacetate + acetyl-CoA + H2O = citrate + CoA + H(+). It functions in the pathway carbohydrate metabolism; tricarboxylic acid cycle; isocitrate from oxaloacetate: step 1/2. This chain is Citrate synthase, mitochondrial (cit-1), found in Aspergillus niger.